We begin with the raw amino-acid sequence, 396 residues long: MSLALYTCLLWLCTSGLWTAQASTNESSNSHRGLAPTNVDFAFNLYQRLVALNPDKNTLISPVSISMALAMVSLGSAQTQSLQSLGFNLTETSEAEIHQSFQYLNYLLKQSDTGLEMNMGNAMFLLQKLKLKDSFLADVKQYYESEALAIDFEDWTKASQQINQHVKDKTQGKIEHVFSDLDSPASFILVNYIFLRGIWELPFSPENTREEDFYVNETSTVKVPMMVQSGSIGYFRDSVFPCQLIQMDYVGNGTAFFILPDQGQMDTVIAALSRDTIDRWGKLMTPRQVNLYIPKFSISDTYDLKDMLEDLNIKDLLTNQSDFSGNTKDVPLTLTMVHKAMLQLDEGNVLPNSTNGAPLHLRSEPLDIKFNKPFILLLFDKFTWSSLMMSQVVNPA.

The N-terminal stretch at 1–22 (MSLALYTCLLWLCTSGLWTAQA) is a signal peptide. Residues Asn-88 and Asn-216 are each glycosylated (N-linked (GlcNAc...) asparagine). Gln-246 serves as a coordination point for cortisol. N-linked (GlcNAc...) asparagine glycosylation is present at Asn-252. Asp-278 is a cortisol binding site. N-linked (GlcNAc...) asparagine glycans are attached at residues Asn-319 and Asn-352. Trp-384 is a binding site for cortisol.

Belongs to the serpin family. As to expression, expressed by the liver; secreted in plasma.

The protein localises to the secreted. Functionally, major transport protein for glucocorticoids and progestins in the blood of almost all vertebrate species. The chain is Corticosteroid-binding globulin (Serpina6) from Rattus norvegicus (Rat).